Consider the following 109-residue polypeptide: Fluoride-specific ion channel FluC 1 (109 aa).

4 helical membrane-spanning segments follow: residues 1–21 (MVIV…YFFS), 29–49 (LPLG…VFYN), 55–75 (EVYA…STLN), and 87–107 (VFYS…FLGI). Na(+) is bound by residues G66 and T69.

Belongs to the fluoride channel Fluc/FEX (TC 1.A.43) family.

It localises to the cell membrane. The enzyme catalyses fluoride(in) = fluoride(out). Na(+) is not transported, but it plays an essential structural role and its presence is essential for fluoride channel function. In terms of biological role, fluoride-specific ion channel. Important for reducing fluoride concentration in the cell, thus reducing its toxicity. This chain is Fluoride-specific ion channel FluC 1, found in Streptococcus pneumoniae serotype 4 (strain ATCC BAA-334 / TIGR4).